A 177-amino-acid chain; its full sequence is ATP synthase subunit delta (177 aa).

Belongs to the ATPase delta chain family. As to quaternary structure, F-type ATPases have 2 components, F(1) - the catalytic core - and F(0) - the membrane proton channel. F(1) has five subunits: alpha(3), beta(3), gamma(1), delta(1), epsilon(1). F(0) has three main subunits: a(1), b(2) and c(10-14). The alpha and beta chains form an alternating ring which encloses part of the gamma chain. F(1) is attached to F(0) by a central stalk formed by the gamma and epsilon chains, while a peripheral stalk is formed by the delta and b chains.

It is found in the cell inner membrane. Functionally, f(1)F(0) ATP synthase produces ATP from ADP in the presence of a proton or sodium gradient. F-type ATPases consist of two structural domains, F(1) containing the extramembraneous catalytic core and F(0) containing the membrane proton channel, linked together by a central stalk and a peripheral stalk. During catalysis, ATP synthesis in the catalytic domain of F(1) is coupled via a rotary mechanism of the central stalk subunits to proton translocation. Its function is as follows. This protein is part of the stalk that links CF(0) to CF(1). It either transmits conformational changes from CF(0) to CF(1) or is implicated in proton conduction. The polypeptide is ATP synthase subunit delta (Sulfurimonas denitrificans (strain ATCC 33889 / DSM 1251) (Thiomicrospira denitrificans (strain ATCC 33889 / DSM 1251))).